A 314-amino-acid polypeptide reads, in one-letter code: 4-hydroxy-3-methylbut-2-enyl diphosphate reductase (314 aa).

Cys-12 contacts [4Fe-4S] cluster. (2E)-4-hydroxy-3-methylbut-2-enyl diphosphate contacts are provided by His-41 and His-74. Dimethylallyl diphosphate-binding residues include His-41 and His-74. Isopentenyl diphosphate is bound by residues His-41 and His-74. Cys-96 lines the [4Fe-4S] cluster pocket. His-124 provides a ligand contact to (2E)-4-hydroxy-3-methylbut-2-enyl diphosphate. His-124 lines the dimethylallyl diphosphate pocket. An isopentenyl diphosphate-binding site is contributed by His-124. Catalysis depends on Glu-126, which acts as the Proton donor. Position 168 (Thr-168) interacts with (2E)-4-hydroxy-3-methylbut-2-enyl diphosphate. Cys-198 lines the [4Fe-4S] cluster pocket. Ser-226, Ser-227, Asn-228, and Ser-270 together coordinate (2E)-4-hydroxy-3-methylbut-2-enyl diphosphate. The dimethylallyl diphosphate site is built by Ser-226, Ser-227, Asn-228, and Ser-270. Residues Ser-226, Ser-227, Asn-228, and Ser-270 each coordinate isopentenyl diphosphate.

Belongs to the IspH family. It depends on [4Fe-4S] cluster as a cofactor.

The enzyme catalyses isopentenyl diphosphate + 2 oxidized [2Fe-2S]-[ferredoxin] + H2O = (2E)-4-hydroxy-3-methylbut-2-enyl diphosphate + 2 reduced [2Fe-2S]-[ferredoxin] + 2 H(+). It catalyses the reaction dimethylallyl diphosphate + 2 oxidized [2Fe-2S]-[ferredoxin] + H2O = (2E)-4-hydroxy-3-methylbut-2-enyl diphosphate + 2 reduced [2Fe-2S]-[ferredoxin] + 2 H(+). Its pathway is isoprenoid biosynthesis; dimethylallyl diphosphate biosynthesis; dimethylallyl diphosphate from (2E)-4-hydroxy-3-methylbutenyl diphosphate: step 1/1. The protein operates within isoprenoid biosynthesis; isopentenyl diphosphate biosynthesis via DXP pathway; isopentenyl diphosphate from 1-deoxy-D-xylulose 5-phosphate: step 6/6. Its function is as follows. Catalyzes the conversion of 1-hydroxy-2-methyl-2-(E)-butenyl 4-diphosphate (HMBPP) into a mixture of isopentenyl diphosphate (IPP) and dimethylallyl diphosphate (DMAPP). Acts in the terminal step of the DOXP/MEP pathway for isoprenoid precursor biosynthesis. The protein is 4-hydroxy-3-methylbut-2-enyl diphosphate reductase of Pseudomonas fluorescens (strain Pf0-1).